A 175-amino-acid polypeptide reads, in one-letter code: uncharacterized protein (175 aa).

The region spanning 1-173 (MYKNIIKLIS…VYKEKYKKLL (173 aa)) is the Macro domain.

It belongs to the MacroD-type family.

This is an uncharacterized protein from Fusobacterium nucleatum subsp. nucleatum (strain ATCC 25586 / DSM 15643 / BCRC 10681 / CIP 101130 / JCM 8532 / KCTC 2640 / LMG 13131 / VPI 4355).